Reading from the N-terminus, the 150-residue chain is Large ribosomal subunit protein bL9 (150 aa).

It belongs to the bacterial ribosomal protein bL9 family.

Its function is as follows. Binds to the 23S rRNA. This Neisseria gonorrhoeae protein is Large ribosomal subunit protein bL9.